Reading from the N-terminus, the 67-residue chain is Large ribosomal subunit protein bL35 (67 aa).

It belongs to the bacterial ribosomal protein bL35 family.

This Bartonella quintana (strain Toulouse) (Rochalimaea quintana) protein is Large ribosomal subunit protein bL35.